The primary structure comprises 164 residues: DNA-directed RNA polymerase 19 kDa subunit (164 aa).

The segment covering 1–35 (MADTDDIIDYESDDLTEYEDDEEEEEDGESLETSD) has biased composition (acidic residues). The segment at 1 to 39 (MADTDDIIDYESDDLTEYEDDEEEEEDGESLETSDIDPK) is disordered.

Belongs to the poxviridae DNA-directed RNA polymerase 19 kDa subunit family. As to quaternary structure, the DNA-dependent RNA polymerase used for intermediate and late genes expression consists of eight subunits Rpo30/OPG66, Rpo7/OPG90, Rpo22/OPG103, Rpo147/OPG105, Rpo18/OPG119, Rpo19/OPG131, Rpo132/OPG151 and Rpo35/OPG156. The same holoenzyme, with the addition of the transcription-specificity factor OPG109, is used for early gene expression.

It localises to the virion. It carries out the reaction RNA(n) + a ribonucleoside 5'-triphosphate = RNA(n+1) + diphosphate. Functionally, part of the DNA-dependent RNA polymerase which catalyzes the transcription of viral DNA into RNA using the four ribonucleoside triphosphates as substrates. Responsible for the transcription of early, intermediate and late genes. DNA-dependent RNA polymerase associates with the early transcription factor (ETF), itself composed of OPG118 and OPG133, thereby allowing the early genes transcription. Late transcription, and probably also intermediate transcription, require newly synthesized RNA polymerase. This chain is DNA-directed RNA polymerase 19 kDa subunit (OPG131), found in Homo sapiens (Human).